The sequence spans 334 residues: Glycerol-3-phosphate dehydrogenase [NAD(P)+] (334 aa).

Residues serine 14, tyrosine 15, histidine 35, and lysine 109 each contribute to the NADPH site. Residues lysine 109, glycine 138, and threonine 140 each coordinate sn-glycerol 3-phosphate. Residue alanine 142 coordinates NADPH. Positions 194, 247, 257, 258, and 259 each coordinate sn-glycerol 3-phosphate. The active-site Proton acceptor is the lysine 194. NADPH is bound at residue arginine 258. Valine 282 and glutamate 284 together coordinate NADPH.

The protein belongs to the NAD-dependent glycerol-3-phosphate dehydrogenase family.

The protein localises to the cytoplasm. It catalyses the reaction sn-glycerol 3-phosphate + NAD(+) = dihydroxyacetone phosphate + NADH + H(+). It carries out the reaction sn-glycerol 3-phosphate + NADP(+) = dihydroxyacetone phosphate + NADPH + H(+). Its pathway is membrane lipid metabolism; glycerophospholipid metabolism. Functionally, catalyzes the reduction of the glycolytic intermediate dihydroxyacetone phosphate (DHAP) to sn-glycerol 3-phosphate (G3P), the key precursor for phospholipid synthesis. The polypeptide is Glycerol-3-phosphate dehydrogenase [NAD(P)+] (Aeromonas salmonicida (strain A449)).